The sequence spans 297 residues: E3 ubiquitin-protein ligase TRIM52 (297 aa).

An RING-type; degenerate zinc finger spans residues 20-62 (CAICLDYFKDPVSISCGHNFCRGCVTQLWSKEDEEDQNEEEDE). The interval 72-167 (VGAMDGWDGS…DEDEDEELYP (96 aa)) is important for rapid proteolytic degradation by the proteasome. The B box-type zinc finger occupies 222–263 (NDQGMCFKHQEALKLFCEVDKEAICVVCRESRSHKQHSVLPL). C227, H230, C249, and H255 together coordinate Zn(2+).

Belongs to the TRIM/RBCC family. In terms of assembly, (Microbial infection) Interacts with Japanese encephalitis virus non-structural protein 2 (NS2A); mediates the ubiquitination of NS2A, targeting it for proteasome-mediated degradation. In terms of processing, autoubiquitinated. Polyubiquitinated. Undergoes extremely rapid proteolytic degradation by the proteasome.

It is found in the cytoplasm. The protein resides in the cytosol. Its subcellular location is the nucleus. It catalyses the reaction S-ubiquitinyl-[E2 ubiquitin-conjugating enzyme]-L-cysteine + [acceptor protein]-L-lysine = [E2 ubiquitin-conjugating enzyme]-L-cysteine + N(6)-ubiquitinyl-[acceptor protein]-L-lysine.. Its pathway is protein modification; protein ubiquitination. In terms of biological role, E3 ubiquitin-protein ligase. Positively regulates the NF-kappa-B signaling pathway. (Microbial infection) Exhibits antiviral activity against Japanese encephalitis virus (JEV). Ubiquitinates the viral non-structural protein 2 (NS2A) and targets it for proteasome-mediated degradation. This chain is E3 ubiquitin-protein ligase TRIM52 (TRIM52), found in Homo sapiens (Human).